The following is a 172-amino-acid chain: Small ribosomal subunit protein uS13 (172 aa).

Residues G131–G172 form a disordered region. The span at T134 to A163 shows a compositional bias: low complexity.

The protein belongs to the universal ribosomal protein uS13 family. In terms of assembly, part of the 30S ribosomal subunit. Forms a loose heterodimer with protein S19. Forms two bridges to the 50S subunit in the 70S ribosome.

Located at the top of the head of the 30S subunit, it contacts several helices of the 16S rRNA. In the 70S ribosome it contacts the 23S rRNA (bridge B1a) and protein L5 of the 50S subunit (bridge B1b), connecting the 2 subunits; these bridges are implicated in subunit movement. The chain is Small ribosomal subunit protein uS13 from Sulfurisphaera tokodaii (strain DSM 16993 / JCM 10545 / NBRC 100140 / 7) (Sulfolobus tokodaii).